The chain runs to 383 residues: Chaperone protein DnaJ (383 aa).

Residues 5 to 70 (DYYEALGVAR…QKRAAYDQFG (66 aa)) form the J domain. Residues 139 to 217 (GTEVQIRVPT…CGGRGRVQSQ (79 aa)) form a CR-type zinc finger. Zn(2+) contacts are provided by C152, C155, C169, C172, C191, C194, C205, and C208. CXXCXGXG motif repeat units lie at residues 152 to 159 (CDACDGKG), 169 to 176 (CPTCKGHG), 191 to 198 (CPRCGGSG), and 205 to 212 (CRKCGGRG). Residues 230–249 (TGDRIRLSGEGEPGENGGPP) are disordered.

This sequence belongs to the DnaJ family. In terms of assembly, homodimer. Zn(2+) serves as cofactor.

The protein localises to the cytoplasm. Its function is as follows. Participates actively in the response to hyperosmotic and heat shock by preventing the aggregation of stress-denatured proteins and by disaggregating proteins, also in an autonomous, DnaK-independent fashion. Unfolded proteins bind initially to DnaJ; upon interaction with the DnaJ-bound protein, DnaK hydrolyzes its bound ATP, resulting in the formation of a stable complex. GrpE releases ADP from DnaK; ATP binding to DnaK triggers the release of the substrate protein, thus completing the reaction cycle. Several rounds of ATP-dependent interactions between DnaJ, DnaK and GrpE are required for fully efficient folding. Also involved, together with DnaK and GrpE, in the DNA replication of plasmids through activation of initiation proteins. The chain is Chaperone protein DnaJ from Alkalilimnicola ehrlichii (strain ATCC BAA-1101 / DSM 17681 / MLHE-1).